The chain runs to 331 residues: Glyceraldehyde-3-phosphate dehydrogenase, cytosolic (331 aa).

Residues 11–12, Asp33, and Arg77 each bind NAD(+); that span reads RI. Residues 148-150, Thr179, 208-209, and Arg231 contribute to the D-glyceraldehyde 3-phosphate site; these read SCT and TG. Catalysis depends on Cys149, which acts as the Nucleophile. Position 313 (Asn313) interacts with NAD(+).

It belongs to the glyceraldehyde-3-phosphate dehydrogenase family. As to quaternary structure, homotetramer.

The protein localises to the cytoplasm. The enzyme catalyses D-glyceraldehyde 3-phosphate + phosphate + NAD(+) = (2R)-3-phospho-glyceroyl phosphate + NADH + H(+). The protein operates within carbohydrate degradation; glycolysis; pyruvate from D-glyceraldehyde 3-phosphate: step 1/5. This is Glyceraldehyde-3-phosphate dehydrogenase, cytosolic (GAPC) from Leishmania mexicana.